The primary structure comprises 336 residues: Solute-binding protein Csal_2479 (336 aa).

Positions 1-33 (MQTNKRLKMASCVKAAAMLGMLLSVSISTTAQA) are cleaved as a signal peptide. Beta-D-glucuronate-binding positions include histidine 42, glutamine 80, arginine 156, arginine 177, tyrosine 200, 217 to 218 (NN), and glutamate 244.

The protein belongs to the bacterial solute-binding protein 7 family. As to quaternary structure, the complex is comprised of an extracytoplasmic solute-binding protein and a heteromeric permease formed by two transmembrane proteins.

Its subcellular location is the periplasm. Its function is as follows. Solute-binding protein that binds D-glucuronate (in vitro). Probably part of a tripartite ATP-independent periplasmic (TRAP) transport system that mediates solute transport into the cytoplasm. This is Solute-binding protein Csal_2479 from Chromohalobacter salexigens (strain ATCC BAA-138 / DSM 3043 / CIP 106854 / NCIMB 13768 / 1H11).